We begin with the raw amino-acid sequence, 148 residues long: Small ribosomal subunit protein eS12B (148 aa).

It belongs to the eukaryotic ribosomal protein eS12 family. In terms of assembly, component of the small ribosomal subunit (SSU). Mature yeast ribosomes consist of a small (40S) and a large (60S) subunit. The 40S small subunit contains 1 molecule of ribosomal RNA (18S rRNA) and at least 33 different proteins. The large 60S subunit contains 3 rRNA molecules (25S, 5.8S and 5S rRNA) and at least 46 different proteins.

The protein resides in the cytoplasm. In terms of biological role, component of the ribosome, a large ribonucleoprotein complex responsible for the synthesis of proteins in the cell. The small ribosomal subunit (SSU) binds messenger RNAs (mRNAs) and translates the encoded message by selecting cognate aminoacyl-transfer RNA (tRNA) molecules. The large subunit (LSU) contains the ribosomal catalytic site termed the peptidyl transferase center (PTC), which catalyzes the formation of peptide bonds, thereby polymerizing the amino acids delivered by tRNAs into a polypeptide chain. The nascent polypeptides leave the ribosome through a tunnel in the LSU and interact with protein factors that function in enzymatic processing, targeting, and the membrane insertion of nascent chains at the exit of the ribosomal tunnel. This is Small ribosomal subunit protein eS12B (rps1202) from Schizosaccharomyces pombe (strain 972 / ATCC 24843) (Fission yeast).